The primary structure comprises 515 residues: Protein translocase subunit SecD (515 aa).

A run of 6 helical transmembrane segments spans residues 5–25, 353–373, 375–395, 398–418, 450–470, and 477–497; these read LIAK…LATP, KGIL…VAYY, LSGL…MGLL, FGAT…GIAV, FSTI…LFQF, and GFAV…ILCT.

It belongs to the SecD/SecF family. SecD subfamily. Forms a complex with SecF. Part of the essential Sec protein translocation apparatus which comprises SecA, SecYEG and auxiliary proteins SecDF. Other proteins may also be involved.

The protein localises to the cell inner membrane. In terms of biological role, part of the Sec protein translocase complex. Interacts with the SecYEG preprotein conducting channel. SecDF uses the proton motive force (PMF) to complete protein translocation after the ATP-dependent function of SecA. The protein is Protein translocase subunit SecD of Desulfurispirillum indicum (strain ATCC BAA-1389 / DSM 22839 / S5).